Reading from the N-terminus, the 210-residue chain is Pyrrolidone-carboxylate peptidase (210 aa).

Catalysis depends on residues glutamate 80, cysteine 143, and histidine 162.

It belongs to the peptidase C15 family. Homotetramer.

It localises to the cytoplasm. It catalyses the reaction Release of an N-terminal pyroglutamyl group from a polypeptide, the second amino acid generally not being Pro.. Removes 5-oxoproline from various penultimate amino acid residues except L-proline. This Chromobacterium violaceum (strain ATCC 12472 / DSM 30191 / JCM 1249 / CCUG 213 / NBRC 12614 / NCIMB 9131 / NCTC 9757 / MK) protein is Pyrrolidone-carboxylate peptidase.